We begin with the raw amino-acid sequence, 872 residues long: DNA mismatch repair protein MutS (872 aa).

ATP is bound at residue 602–609 (GPNMSGKS).

The protein belongs to the DNA mismatch repair MutS family.

Functionally, this protein is involved in the repair of mismatches in DNA. It is possible that it carries out the mismatch recognition step. This protein has a weak ATPase activity. This is DNA mismatch repair protein MutS from Staphylococcus aureus (strain bovine RF122 / ET3-1).